A 282-amino-acid chain; its full sequence is Elongation factor Ts (282 aa).

The tract at residues 80 to 83 (TDFV) is involved in Mg(2+) ion dislocation from EF-Tu.

Belongs to the EF-Ts family.

It localises to the cytoplasm. Its function is as follows. Associates with the EF-Tu.GDP complex and induces the exchange of GDP to GTP. It remains bound to the aminoacyl-tRNA.EF-Tu.GTP complex up to the GTP hydrolysis stage on the ribosome. The protein is Elongation factor Ts (tsf) of Chlamydia pneumoniae (Chlamydophila pneumoniae).